A 251-amino-acid chain; its full sequence is Flap endonuclease Xni (251 aa).

Aspartate 104 provides a ligand contact to Mg(2+). Residues valine 160–leucine 249 enclose the 5'-3' exonuclease domain. K(+) contacts are provided by leucine 171, alanine 172, proline 180, valine 182, and isoleucine 185. Residues glycine 184–serine 189 are interaction with DNA.

This sequence belongs to the Xni family. The cofactor is Mg(2+). K(+) serves as cofactor.

Has flap endonuclease activity. During DNA replication, flap endonucleases cleave the 5'-overhanging flap structure that is generated by displacement synthesis when DNA polymerase encounters the 5'-end of a downstream Okazaki fragment. This Escherichia coli O139:H28 (strain E24377A / ETEC) protein is Flap endonuclease Xni.